The primary structure comprises 108 residues: Thioredoxin Asp f 28 (108 aa).

The region spanning 1-108 (MSHGKVIAVD…LEEMIKSISA (108 aa)) is the Thioredoxin domain. Catalysis depends on nucleophile residues C33 and C36. C33 and C36 are oxidised to a cystine.

It belongs to the thioredoxin family.

In terms of biological role, participates in various redox reactions through the reversible oxidation of its active center dithiol to a disulfide and catalyzes dithiol-disulfide exchange reactions. The chain is Thioredoxin Asp f 28 from Aspergillus fumigatus (Neosartorya fumigata).